Consider the following 396-residue polypeptide: Elongation factor Tu (396 aa).

Residues 11–205 enclose the tr-type G domain; sequence KPHVNIGTIG…VVDEYIPTPK (195 aa). The G1 stretch occupies residues 20–27; that stretch reads GHVDHGKT. Residue 20-27 participates in GTP binding; sequence GHVDHGKT. Thr27 is a binding site for Mg(2+). The segment at 61-65 is G2; that stretch reads GITIN. The interval 82–85 is G3; that stretch reads DAPG. GTP is bound by residues 82 to 86 and 137 to 140; these read DAPGH and NKTD. Residues 137-140 form a G4 region; that stretch reads NKTD. Residues 175-177 form a G5 region; it reads SAL.

This sequence belongs to the TRAFAC class translation factor GTPase superfamily. Classic translation factor GTPase family. EF-Tu/EF-1A subfamily. As to quaternary structure, monomer.

It localises to the cytoplasm. The enzyme catalyses GTP + H2O = GDP + phosphate + H(+). Functionally, GTP hydrolase that promotes the GTP-dependent binding of aminoacyl-tRNA to the A-site of ribosomes during protein biosynthesis. The chain is Elongation factor Tu from Limosilactobacillus fermentum (strain NBRC 3956 / LMG 18251) (Lactobacillus fermentum).